The primary structure comprises 335 residues: MSVLLGQILDALGGELVGGDREMPISRIAPLDSAGAGDLSFLSNPRYRQQLAASEAACVIVAPAMRELAQQRGACIVVPDPYAYFARATQWWKRNCRSVAPAGIHPSAVVHESAIVDASATIGPLCVVEEGATIGAHTVLKSRVTIGENCHVGARCLLHSGVVLGADGFGFAPENGAWVKIEQLGGVRIGDDVEIGANTCIDRGALDDTVIEDGVKLDNLIQIGHNVHVGKHTAMAGCVGVAGSARIGAHCTVGGGAIVLGHLQLADRVHISAATVVTRSLTQSGVYTGMFPVDENAKWEKNAATLKQLHSMRDRIKALERQLQQSADQGHNGTQ.

The active-site Proton acceptor is the His225.

This sequence belongs to the transferase hexapeptide repeat family. LpxD subfamily. Homotrimer.

It catalyses the reaction a UDP-3-O-[(3R)-3-hydroxyacyl]-alpha-D-glucosamine + a (3R)-hydroxyacyl-[ACP] = a UDP-2-N,3-O-bis[(3R)-3-hydroxyacyl]-alpha-D-glucosamine + holo-[ACP] + H(+). It functions in the pathway bacterial outer membrane biogenesis; LPS lipid A biosynthesis. Its function is as follows. Catalyzes the N-acylation of UDP-3-O-acylglucosamine using 3-hydroxyacyl-ACP as the acyl donor. Is involved in the biosynthesis of lipid A, a phosphorylated glycolipid that anchors the lipopolysaccharide to the outer membrane of the cell. The chain is UDP-3-O-acylglucosamine N-acyltransferase from Delftia acidovorans (strain DSM 14801 / SPH-1).